Consider the following 395-residue polypeptide: Elongation factor Tu (395 aa).

A tr-type G domain is found at 10-204 (KTHANIGTIG…AVDSYIPTPE (195 aa)). The segment at 19-26 (GHVDHGKT) is G1. 19–26 (GHVDHGKT) contacts GTP. Thr26 lines the Mg(2+) pocket. The G2 stretch occupies residues 60-64 (GITIN). The G3 stretch occupies residues 81 to 84 (DCPG). Residues 81–85 (DCPGH) and 136–139 (NKCD) each bind GTP. The segment at 136–139 (NKCD) is G4. Residues 174-176 (SAL) form a G5 region.

This sequence belongs to the TRAFAC class translation factor GTPase superfamily. Classic translation factor GTPase family. EF-Tu/EF-1A subfamily. As to quaternary structure, monomer.

The protein localises to the cytoplasm. It catalyses the reaction GTP + H2O = GDP + phosphate + H(+). Functionally, GTP hydrolase that promotes the GTP-dependent binding of aminoacyl-tRNA to the A-site of ribosomes during protein biosynthesis. This Lysinibacillus sphaericus (strain C3-41) protein is Elongation factor Tu.